A 388-amino-acid polypeptide reads, in one-letter code: Pepsin A-2/A-3 (388 aa).

An N-terminal signal peptide occupies residues 1-15; sequence MKWLLLLGLVALSEC. 2 propeptides (activation peptide) span residues 16 to 40 and 41 to 62; these read IIHK…LLKD and FLKK…APTL. Residues 76 to 385 enclose the Peptidase A1 domain; that stretch reads YFGTIGIGTP…DRANNQVGLA (310 aa). D94 is an active-site residue. The cysteines at positions 107 and 112 are disulfide-linked. S130 bears the Phosphoserine mark. Residues C268 and C272 are joined by a disulfide bond. D277 is a catalytic residue. C311 and C344 are joined by a disulfide.

It belongs to the peptidase A1 family. Pepsin A-2 is phosphorylated, but not pepsin A-3. In terms of processing, each pepsinogen is converted to corresponding pepsin at pH 2.0 in part as a result of the release of a 47 AA activation segment and in part as a result of stepwise proteolytic cleavage via an intermediate form(s).

Its subcellular location is the secreted. The catalysed reaction is Preferential cleavage: hydrophobic, preferably aromatic, residues in P1 and P1' positions. Cleaves 1-Phe-|-Val-2, 4-Gln-|-His-5, 13-Glu-|-Ala-14, 14-Ala-|-Leu-15, 15-Leu-|-Tyr-16, 16-Tyr-|-Leu-17, 23-Gly-|-Phe-24, 24-Phe-|-Phe-25 and 25-Phe-|-Tyr-26 bonds in the B chain of insulin.. In terms of biological role, shows particularly broad specificity; although bonds involving phenylalanine and leucine are preferred, many others are also cleaved to some extent. This chain is Pepsin A-2/A-3, found in Macaca fuscata fuscata (Japanese macaque).